The sequence spans 1479 residues: Chromosome partition protein MukB (1479 aa).

Position 34-41 (34-41) interacts with ATP; sequence GGNGAGKS. Coiled coils occupy residues 337–418, 511–604, 780–810, 847–1116, and 1206–1265; these read LNLV…QYQQ, QAER…APVW, RAAR…DVQK, ELDR…AKAG, and DDPV…LQAV. Residues 666–783 form a flexible hinge region; sequence PGGSEDPRLN…EVPLFGRAAR (118 aa).

The protein belongs to the SMC family. MukB subfamily. In terms of assembly, homodimerization via its hinge domain. Binds to DNA via its C-terminal region. Interacts, and probably forms a ternary complex, with MukE and MukF via its C-terminal region. The complex formation is stimulated by calcium or magnesium. Interacts with tubulin-related protein FtsZ.

The protein localises to the cytoplasm. Its subcellular location is the nucleoid. Its function is as follows. Plays a central role in chromosome condensation, segregation and cell cycle progression. Functions as a homodimer, which is essential for chromosome partition. Involved in negative DNA supercoiling in vivo, and by this means organize and compact chromosomes. May achieve or facilitate chromosome segregation by condensation DNA from both sides of a centrally located replisome during cell division. In Pectobacterium atrosepticum (strain SCRI 1043 / ATCC BAA-672) (Erwinia carotovora subsp. atroseptica), this protein is Chromosome partition protein MukB.